The sequence spans 453 residues: Tubulin beta-2 chain (453 aa).

Gln11, Glu71, Ser140, Gly144, Thr145, Gly146, Asn206, and Asn228 together coordinate GTP. Residue Glu71 coordinates Mg(2+).

The protein belongs to the tubulin family. As to quaternary structure, dimer of alpha and beta chains. A typical microtubule is a hollow water-filled tube with an outer diameter of 25 nm and an inner diameter of 15 nM. Alpha-beta heterodimers associate head-to-tail to form protofilaments running lengthwise along the microtubule wall with the beta-tubulin subunit facing the microtubule plus end conferring a structural polarity. Microtubules usually have 13 protofilaments but different protofilament numbers can be found in some organisms and specialized cells. It depends on Mg(2+) as a cofactor.

The protein resides in the cytoplasm. It localises to the cytoskeleton. Its function is as follows. Tubulin is the major constituent of microtubules, a cylinder consisting of laterally associated linear protofilaments composed of alpha- and beta-tubulin heterodimers. Microtubules grow by the addition of GTP-tubulin dimers to the microtubule end, where a stabilizing cap forms. Below the cap, tubulin dimers are in GDP-bound state, owing to GTPase activity of alpha-tubulin. This chain is Tubulin beta-2 chain, found in Geotrichum candidum (Oospora lactis).